Consider the following 201-residue polypeptide: ATP-dependent Clp protease proteolytic subunit 2 (201 aa).

The active-site Nucleophile is the Ser-100. His-125 is an active-site residue.

Belongs to the peptidase S14 family. As to quaternary structure, fourteen ClpP subunits assemble into 2 heptameric rings which stack back to back to give a disk-like structure with a central cavity, resembling the structure of eukaryotic proteasomes.

Its subcellular location is the cytoplasm. It carries out the reaction Hydrolysis of proteins to small peptides in the presence of ATP and magnesium. alpha-casein is the usual test substrate. In the absence of ATP, only oligopeptides shorter than five residues are hydrolyzed (such as succinyl-Leu-Tyr-|-NHMec, and Leu-Tyr-Leu-|-Tyr-Trp, in which cleavage of the -Tyr-|-Leu- and -Tyr-|-Trp bonds also occurs).. In terms of biological role, cleaves peptides in various proteins in a process that requires ATP hydrolysis. Has a chymotrypsin-like activity. Plays a major role in the degradation of misfolded proteins. The protein is ATP-dependent Clp protease proteolytic subunit 2 of Corynebacterium glutamicum (strain ATCC 13032 / DSM 20300 / JCM 1318 / BCRC 11384 / CCUG 27702 / LMG 3730 / NBRC 12168 / NCIMB 10025 / NRRL B-2784 / 534).